The following is a 181-amino-acid chain: SAGA-associated factor 11 (181 aa).

The segment at Phe93–Cys114 adopts an SGF11-type zinc-finger fold. The span at Gly116–Thr125 shows a compositional bias: basic residues. Residues Gly116–Asp181 are disordered. Positions Thr126–Ser153 are enriched in low complexity.

The protein belongs to the SGF11 family. Component of a deubiquitination module (DUB module) formed by ENY2, SGF11, and UBP22 in Arabidopsis. Interacts directly with ENY2 and UBP22. Interacts with DDA1. Ubiquitinated in DET1-dependent manner. Ubiquitination probably leads to its subsequent proteasomal degradation.

The protein localises to the nucleus. Its subcellular location is the nucleoplasm. Component of a deubiquitination module (DUB module) that specifically deubiquinates monoubiquinated histone H2B (H2Bub). Does not seem to be a component of the TREX-2 complex. Seems to act independently of the SAGA multiprotein complex. The DUB module is responsible for the major H2Bub deubiquitinase activity in Arabidopsis. In Arabidopsis thaliana (Mouse-ear cress), this protein is SAGA-associated factor 11.